The sequence spans 243 residues: UPF0758 protein Cyan7425_1778 (243 aa).

The region spanning 112 to 235 (TIINDPAVAA…FRSLRQTTKL (124 aa)) is the MPN domain. The Zn(2+) site is built by histidine 184, histidine 186, and aspartate 197. Positions 184-197 (HNHPSGNVEPSPED) match the JAMM motif motif.

Belongs to the UPF0758 family.

The chain is UPF0758 protein Cyan7425_1778 from Cyanothece sp. (strain PCC 7425 / ATCC 29141).